A 66-amino-acid chain; its full sequence is UPF0370 protein YpfN (66 aa).

The chain crosses the membrane as a helical span at residues 4-24; that stretch reads LAKYWWILVLVFLVGVLLNVI. Residues 39 to 66 are disordered; sequence KPELPPHRDFNDKWDDEEDWPKKDQPKK. The segment covering 42–51 has biased composition (basic and acidic residues); it reads LPPHRDFNDK.

Belongs to the UPF0370 family.

It localises to the cell membrane. This is UPF0370 protein YpfN from Salmonella paratyphi A (strain AKU_12601).